The following is a 173-amino-acid chain: Crossover junction endodeoxyribonuclease RuvC (173 aa).

Active-site residues include Asp8, Glu67, and Asp139. 3 residues coordinate Mg(2+): Asp8, Glu67, and Asp139.

It belongs to the RuvC family. As to quaternary structure, homodimer which binds Holliday junction (HJ) DNA. The HJ becomes 2-fold symmetrical on binding to RuvC with unstacked arms; it has a different conformation from HJ DNA in complex with RuvA. In the full resolvosome a probable DNA-RuvA(4)-RuvB(12)-RuvC(2) complex forms which resolves the HJ. Requires Mg(2+) as cofactor.

The protein localises to the cytoplasm. The enzyme catalyses Endonucleolytic cleavage at a junction such as a reciprocal single-stranded crossover between two homologous DNA duplexes (Holliday junction).. In terms of biological role, the RuvA-RuvB-RuvC complex processes Holliday junction (HJ) DNA during genetic recombination and DNA repair. Endonuclease that resolves HJ intermediates. Cleaves cruciform DNA by making single-stranded nicks across the HJ at symmetrical positions within the homologous arms, yielding a 5'-phosphate and a 3'-hydroxyl group; requires a central core of homology in the junction. The consensus cleavage sequence is 5'-(A/T)TT(C/G)-3'. Cleavage occurs on the 3'-side of the TT dinucleotide at the point of strand exchange. HJ branch migration catalyzed by RuvA-RuvB allows RuvC to scan DNA until it finds its consensus sequence, where it cleaves and resolves the cruciform DNA. The protein is Crossover junction endodeoxyribonuclease RuvC of Erwinia tasmaniensis (strain DSM 17950 / CFBP 7177 / CIP 109463 / NCPPB 4357 / Et1/99).